We begin with the raw amino-acid sequence, 470 residues long: Histidine--tRNA ligase (470 aa).

The segment at 69–99 is disordered; the sequence is GIDPILPPNRQAEKDKSGETGKDKSGETGSE. Basic and acidic residues predominate over residues 79–94; it reads QAEKDKSGETGKDKSG.

This sequence belongs to the class-II aminoacyl-tRNA synthetase family. As to quaternary structure, homodimer.

It localises to the cytoplasm. The enzyme catalyses tRNA(His) + L-histidine + ATP = L-histidyl-tRNA(His) + AMP + diphosphate + H(+). The polypeptide is Histidine--tRNA ligase (Nostoc punctiforme (strain ATCC 29133 / PCC 73102)).